Reading from the N-terminus, the 489-residue chain is Threonine/serine exporter (489 aa).

10 helical membrane-spanning segments follow: residues 151-171 (GFPVALLGWAMMGGAVAVLLG), 174-194 (WQVSLIAFITAFTIIATTSFL), 206-226 (VVGGFIATLPASIAYSLALQF), 233-253 (SQIIASGIVVLLAGLTLVQSL), 268-288 (FFETLLFTGGIVAGVGLGIQL), 314-334 (IIAGGVTAAAFAVGCYAEWSS), 335-355 (VIIAGLTALMGSAFYYLFVVY), 356-376 (LGPVSAAAIAATAVGFTGGLL), 381-401 (LIPPLIVAIAGITPMLPGLAI), and 420-440 (IAVALATASSLAAGVVLGEWI). The disordered stretch occupies residues 464–489 (FQEEAEQNQRRQRKRPKTNQRFGNKR). Residues 473–489 (RRQRKRPKTNQRFGNKR) show a composition bias toward basic residues.

It belongs to the ThrE exporter (TC 2.A.79) family.

It is found in the cell membrane. It catalyses the reaction L-threonine(in) + H(+)(out) = L-threonine(out) + H(+)(in). With respect to regulation, transport is inhibited by the proton ionophore carbonyl cyanide m-chlorophenylhydrazone (CCCP). In terms of biological role, catalyzes the export of L-threonine and L-serine from the cell to the extracellular environment. Export is dependent on the proton motive force. This chain is Threonine/serine exporter, found in Corynebacterium glutamicum (Brevibacterium saccharolyticum).